The chain runs to 542 residues: MKFIFITGGVVSSLGKGITASSIGRLLKARGFKINMVKIDPYLQIDAGTMSPYEHGEVFVTDDGGETDLDLGNYERFVDIKLSANNNITTGKVYWSVLSKERRGDYLGKTVQVIPHITNEIKELIKSTGTNCDITIVEIGGTVGDIESLPFLEAIRQFKKDVGDNNVLYVHVSLLPYIKTAGEIKTKPTQHSVKELRGIGIQPNILVCRTEIPISEKTREKLALFCDVEKDAVIEAKDARTIYEVPLNLEREGIAKLIINKLKLNTNNSKPDLKEWRAMVDRIVNPLNEITIGIVGKYIMLKDAYTSITESLVHAGAKHDTKVNIEWISSEELRDETYKETMDKLVEDEKLDGILIPGGFGERGIDGKVNASKYARENNIPYLGICLGMQCAVIDFARNVCNLKGANSTEFDEGAPFPVIDYLPEQRDIEDKGGTMRLGEYKAILKEGSLAQKLYNEKEAFERHRHRYEVNPEYHDILTENGLIISGTSPDGKLAEFIELDTLTHPYFIATQAHPEFKSRPNKPHPLFDGLVKSALDKKLKK.

The segment at 1–264 (MKFIFITGGV…AKLIINKLKL (264 aa)) is amidoligase domain. Ser12 serves as a coordination point for CTP. Ser12 serves as a coordination point for UTP. 13 to 18 (SLGKGI) lines the ATP pocket. L-glutamine is bound at residue Tyr53. Asp70 contributes to the ATP binding site. Mg(2+) contacts are provided by Asp70 and Glu138. CTP is bound by residues 145 to 147 (DIE), 185 to 190 (KTKPTQ), and Lys221. Residues 185-190 (KTKPTQ) and Lys221 contribute to the UTP site. Residue 237–239 (KDA) participates in ATP binding. The region spanning 298 to 541 (YIMLKDAYTS…VKSALDKKLK (244 aa)) is the Glutamine amidotransferase type-1 domain. Gly359 contributes to the L-glutamine binding site. Catalysis depends on Cys386, which acts as the Nucleophile; for glutamine hydrolysis. Residues 387–390 (LGMQ), Glu410, and Arg467 each bind L-glutamine. Active-site residues include His514 and Glu516.

The protein belongs to the CTP synthase family. Homotetramer.

The enzyme catalyses UTP + L-glutamine + ATP + H2O = CTP + L-glutamate + ADP + phosphate + 2 H(+). The catalysed reaction is L-glutamine + H2O = L-glutamate + NH4(+). It catalyses the reaction UTP + NH4(+) + ATP = CTP + ADP + phosphate + 2 H(+). The protein operates within pyrimidine metabolism; CTP biosynthesis via de novo pathway; CTP from UDP: step 2/2. Its activity is regulated as follows. Allosterically activated by GTP, when glutamine is the substrate; GTP has no effect on the reaction when ammonia is the substrate. The allosteric effector GTP functions by stabilizing the protein conformation that binds the tetrahedral intermediate(s) formed during glutamine hydrolysis. Inhibited by the product CTP, via allosteric rather than competitive inhibition. In terms of biological role, catalyzes the ATP-dependent amination of UTP to CTP with either L-glutamine or ammonia as the source of nitrogen. Regulates intracellular CTP levels through interactions with the four ribonucleotide triphosphates. The sequence is that of CTP synthase from Methanococcus aeolicus (strain ATCC BAA-1280 / DSM 17508 / OCM 812 / Nankai-3).